Consider the following 561-residue polypeptide: DNA ligase B (561 aa).

Lysine 125 functions as the N6-AMP-lysine intermediate in the catalytic mechanism.

It belongs to the NAD-dependent DNA ligase family. LigB subfamily.

The enzyme catalyses NAD(+) + (deoxyribonucleotide)n-3'-hydroxyl + 5'-phospho-(deoxyribonucleotide)m = (deoxyribonucleotide)n+m + AMP + beta-nicotinamide D-nucleotide.. Catalyzes the formation of phosphodiester linkages between 5'-phosphoryl and 3'-hydroxyl groups in double-stranded DNA using NAD as a coenzyme and as the energy source for the reaction. In Salmonella heidelberg (strain SL476), this protein is DNA ligase B.